We begin with the raw amino-acid sequence, 77 residues long: uncharacterized protein (77 aa).

Residues 56–77 form a disordered region; it reads SVIPKQQPPSSAAAISESEFED. Positions 65 to 77 are enriched in low complexity; sequence SSAAAISESEFED.

This is an uncharacterized protein from Frog virus 3 (isolate Goorha) (FV-3).